The sequence spans 601 residues: Proline--tRNA ligase (601 aa).

The protein belongs to the class-II aminoacyl-tRNA synthetase family. ProS type 1 subfamily. As to quaternary structure, homodimer.

It is found in the cytoplasm. It catalyses the reaction tRNA(Pro) + L-proline + ATP = L-prolyl-tRNA(Pro) + AMP + diphosphate. Functionally, catalyzes the attachment of proline to tRNA(Pro) in a two-step reaction: proline is first activated by ATP to form Pro-AMP and then transferred to the acceptor end of tRNA(Pro). As ProRS can inadvertently accommodate and process non-cognate amino acids such as alanine and cysteine, to avoid such errors it has two additional distinct editing activities against alanine. One activity is designated as 'pretransfer' editing and involves the tRNA(Pro)-independent hydrolysis of activated Ala-AMP. The other activity is designated 'posttransfer' editing and involves deacylation of mischarged Ala-tRNA(Pro). The misacylated Cys-tRNA(Pro) is not edited by ProRS. This chain is Proline--tRNA ligase, found in Picosynechococcus sp. (strain ATCC 27264 / PCC 7002 / PR-6) (Agmenellum quadruplicatum).